The primary structure comprises 766 residues: Phosphoribosylformylglycinamidine synthase subunit PurL (766 aa).

Histidine 49 is an active-site residue. The ATP site is built by tyrosine 52 and lysine 91. A Mg(2+)-binding site is contributed by glutamate 93. Substrate contacts are provided by residues 94–97 (SHNH) and arginine 116. The active-site Proton acceptor is histidine 95. Position 117 (aspartate 117) interacts with Mg(2+). Glutamine 240 is a substrate binding site. Aspartate 268 contacts Mg(2+). 312–314 (ESQ) lines the substrate pocket. Aspartate 508 and glycine 545 together coordinate ATP. Asparagine 546 provides a ligand contact to Mg(2+). A substrate-binding site is contributed by serine 548.

Belongs to the FGAMS family. In terms of assembly, monomer. Part of the FGAM synthase complex composed of 1 PurL, 1 PurQ and 2 PurS subunits.

It is found in the cytoplasm. It catalyses the reaction N(2)-formyl-N(1)-(5-phospho-beta-D-ribosyl)glycinamide + L-glutamine + ATP + H2O = 2-formamido-N(1)-(5-O-phospho-beta-D-ribosyl)acetamidine + L-glutamate + ADP + phosphate + H(+). It functions in the pathway purine metabolism; IMP biosynthesis via de novo pathway; 5-amino-1-(5-phospho-D-ribosyl)imidazole from N(2)-formyl-N(1)-(5-phospho-D-ribosyl)glycinamide: step 1/2. Functionally, part of the phosphoribosylformylglycinamidine synthase complex involved in the purines biosynthetic pathway. Catalyzes the ATP-dependent conversion of formylglycinamide ribonucleotide (FGAR) and glutamine to yield formylglycinamidine ribonucleotide (FGAM) and glutamate. The FGAM synthase complex is composed of three subunits. PurQ produces an ammonia molecule by converting glutamine to glutamate. PurL transfers the ammonia molecule to FGAR to form FGAM in an ATP-dependent manner. PurS interacts with PurQ and PurL and is thought to assist in the transfer of the ammonia molecule from PurQ to PurL. This Synechococcus sp. (strain CC9902) protein is Phosphoribosylformylglycinamidine synthase subunit PurL.